The primary structure comprises 2471 residues: Neurogenic locus notch homolog protein 2 (2471 aa).

The N-terminal stretch at 1–25 (MPALRPALLWALLALWLCCAAPAHA) is a signal peptide. EGF-like domains follow at residues 26–63 (LQCRDGYEPCVNEGMCVTYHNGTGYCKCPEGFLGEYCQ), 64–102 (HRDPCEKNRCQNGGTCVAQAMLGKATCRCASGFTGEDCQ), 105–143 (TSHPCFVSRPCLNGGTCHMLSRDTYECTCQVGFTGKECQ), and 144–180 (WTDACLSHPCANGSTCTTVANQFSCKCLTGFTGQKCE). Residues 26-1677 (LQCRDGYEPC…SESLTPERTQ (1652 aa)) are Extracellular-facing. 84 disulfides stabilise this stretch: Cys28-Cys41, Cys35-Cys51, Cys53-Cys62, Cys68-Cys79, Cys73-Cys90, Cys92-Cys101, Cys109-Cys121, Cys115-Cys131, Cys133-Cys142, Cys148-Cys159, Cys153-Cys168, Cys170-Cys179, Cys186-Cys198, Cys192-Cys207, Cys209-Cys218, Cys225-Cys236, Cys230-Cys246, Cys248-Cys257, Cys264-Cys275, Cys269-Cys284, Cys286-Cys295, Cys302-Cys315, Cys309-Cys324, Cys326-Cys335, Cys342-Cys353, Cys347-Cys362, Cys364-Cys373, Cys379-Cys390, Cys384-Cys401, Cys403-Cys412, Cys419-Cys433, Cys427-Cys442, Cys444-Cys453, Cys460-Cys471, Cys465-Cys480, Cys482-Cys491, Cys498-Cys509, Cys503-Cys518, Cys520-Cys529, Cys536-Cys547, Cys541-Cys556, Cys558-Cys567, Cys574-Cys584, Cys579-Cys593, Cys595-Cys604, Cys611-Cys622, Cys616-Cys631, Cys633-Cys642, Cys649-Cys659, Cys654-Cys668, Cys670-Cys679, Cys686-Cys697, Cys691-Cys706, Cys708-Cys717, Cys724-Cys734, Cys729-Cys743, Cys745-Cys754, Cys761-Cys772, Cys766-Cys781, Cys783-Cys792, Cys799-Cys810, Cys804-Cys819, Cys821-Cys830, Cys837-Cys848, Cys842-Cys859, Cys861-Cys870, Cys877-Cys888, Cys882-Cys897, Cys899-Cys908, Cys915-Cys926, Cys920-Cys935, Cys937-Cys946, Cys953-Cys964, Cys958-Cys973, Cys975-Cys984, Cys991-Cys1002, Cys996-Cys1011, Cys1013-Cys1022, Cys1029-Cys1040, Cys1034-Cys1049, Cys1051-Cys1060, Cys1067-Cys1078, Cys1072-Cys1087, and Cys1089-Cys1098. Asn46 is a glycosylation site (N-linked (GlcNAc...) asparagine). Asn155 is a glycosylation site (N-linked (GlcNAc...) asparagine). The EGF-like 5; calcium-binding domain occupies 182–219 (DVNECDIPGHCQHGGTCLNLPGSYQCQCPQGFTGQYCD). Residues 221-258 (LYVPCAPSPCVNGGTCRQTGDFTFECNCLPGFEGSTCE) enclose the EGF-like 6 domain. The 37-residue stretch at 260–296 (NIDDCPNHRCQNGGVCVDGVNTYNCRCPPQWTGQFCT) folds into the EGF-like 7; calcium-binding domain. The EGF-like 8; calcium-binding domain occupies 298 to 336 (DVDECLLQPNACQNGGTCANRNGGYGCVCVNGWSGDDCS). One can recognise an EGF-like 9; calcium-binding domain in the interval 338-374 (NIDDCAFASCTPGSTCIDRVASFSCMCPEGKAGLLCH). The EGF-like 10 domain maps to 375-413 (LDDACISNPCHKGALCDTNPLNGQYICTCPQGYKGADCT). Positions 415 to 454 (DVDECAMANSNPCEHAGKCVNTDGAFHCECLKGYAGPRCE) constitute an EGF-like 11; calcium-binding domain. The EGF-like 12; calcium-binding domain maps to 456–492 (DINECHSDPCQNDATCLDKIGGFTCLCMPGFKGVHCE). Residues 494–530 (EINECQSNPCVNNGQCVDKVNRFQCLCPPGFTGPVCQ) enclose the EGF-like 13; calcium-binding domain. One can recognise an EGF-like 14; calcium-binding domain in the interval 532 to 568 (DIDDCSSTPCLNGAKCIDHPNGYECQCATGFTGVLCE). In terms of domain architecture, EGF-like 15; calcium-binding spans 570–605 (NIDNCDPDPCHHGQCQDGIDSYTCICNPGYMGAICS). In terms of domain architecture, EGF-like 16; calcium-binding spans 607–643 (QIDECYSSPCLNDGRCIDLVNGYQCNCQPGTSGVNCE). O-linked (Glc...) serine; alternate glycosylation occurs at Ser613. A glycan (O-linked (Xyl...) serine; alternate) is linked at Ser613. In terms of domain architecture, EGF-like 17; calcium-binding spans 645–680 (NFDDCASNPCIHGICMDGINRYSCVCSPGFTGQRCN). Residues 682 to 718 (DIDECASNPCRKGATCINGVNGFRCICPEGPHHPSCY) form the EGF-like 18; calcium-binding domain. Residues 720–755 (QVNECLSNPCIHGNCTGGLSGYKCLCDAGWVGINCE) form the EGF-like 19 domain. N-linked (GlcNAc...) asparagine glycosylation occurs at Asn733. An EGF-like 20; calcium-binding domain is found at 757 to 793 (DKNECLSNPCQNGGTCDNLVNGYRCTCKKGFKGYNCQ). The 37-residue stretch at 795 to 831 (NIDECASNPCLNQGTCFDDISGYTCHCVLPYTGKNCQ) folds into the EGF-like 21; calcium-binding domain. An EGF-like 22 domain is found at 833-871 (VLAPCSPNPCENAAVCKESPNFESYTCLCAPGWQGQRCT). The region spanning 873–909 (DIDECISKPCMNHGLCHNTQGSYMCECPPGFSGMDCE) is the EGF-like 23; calcium-binding domain. One can recognise an EGF-like 24; calcium-binding domain in the interval 911–947 (DIDDCLANPCQNGGSCMDGVNTFSCLCLPGFTGDKCQ). An EGF-like 25; calcium-binding domain is found at 949–985 (DMNECLSEPCKNGGTCSDYVNSYTCKCQAGFDGVHCE). The EGF-like 26; calcium-binding domain occupies 987 to 1023 (NINECTESSCFNGGTCVDGINSFSCLCPVGFTGSFCL). In terms of domain architecture, EGF-like 27; calcium-binding spans 1025–1061 (EINECSSHPCLNEGTCVDGLGTYRCSCPLGYTGKNCQ). EGF-like domains are found at residues 1063–1099 (LVNLCSRSPCKNKGTCVQKKAESQCLCPSGWAGAYCD) and 1101–1147 (PNVS…SYCE). A glycan (N-linked (GlcNAc...) asparagine) is linked at Asn1102. 24 disulfide bridges follow: Cys1105/Cys1126, Cys1120/Cys1135, Cys1137/Cys1146, Cys1153/Cys1164, Cys1158/Cys1173, Cys1175/Cys1184, Cys1191/Cys1202, Cys1196/Cys1211, Cys1213/Cys1222, Cys1229/Cys1241, Cys1235/Cys1250, Cys1252/Cys1261, Cys1268/Cys1281, Cys1273/Cys1290, Cys1292/Cys1301, Cys1308/Cys1319, Cys1313/Cys1331, Cys1333/Cys1342, Cys1378/Cys1389, Cys1383/Cys1400, Cys1402/Cys1411, Cys1425/Cys1448, Cys1430/Cys1443, and Cys1439/Cys1455. Residues 1149–1185 (QLDECASNPCQHGATCSDFIGGYRCECVPGYQGVNCE) form the EGF-like 30; calcium-binding domain. In terms of domain architecture, EGF-like 31; calcium-binding spans 1187 to 1223 (EVDECQNQPCQNGGTCIDLVNHFKCSCPPGTRGLLCE). The EGF-like 32; calcium-binding domain maps to 1225–1262 (NIDDCARGPHCLNGGQCMDRIGGYSCRCLPGFAGERCE). 3 consecutive EGF-like domains span residues 1264–1302 (DINECLSNPCSSEGSLDCIQLTNDYLCVCRSAFTGRHCE), 1304–1343 (FVDVCPQMPCLNGGTCAVASNMPDGFICRCPPGFSGARCQ), and 1374–1412 (CESGCASSPCQHGGSCHPQRQPPYYSCQCAPPFSGSRCE). 3 LNR repeats span residues 1425-1465 (CLSQ…PWAN), 1466-1502 (CSSPLPCWDYINNQCDELCNTVECLFDNFECQGNSKT), and 1503-1544 (CKYD…NLAE). A negative regulatory region (NRR) region spans residues 1425-1677 (CLSQYCADKA…SESLTPERTQ (253 aa)). Residue Asn1465 is glycosylated (N-linked (GlcNAc...) asparagine). 7 cysteine pairs are disulfide-bonded: Cys1466–Cys1489, Cys1472–Cys1484, Cys1480–Cys1496, Cys1503–Cys1527, Cys1509–Cys1522, Cys1518–Cys1534, and Cys1632–Cys1639. Residues 1678–1698 (LLYLLAVAVVIILFIILLGVI) traverse the membrane as a helical segment. Residues 1699 to 2471 (MAKRKRKHGS…PPHNNMQVYA (773 aa)) are Cytoplasmic-facing. Thr1716 bears the Phosphothreonine mark. Residues 1754–1788 (TSEHWVDDEGPQPKKVKAEDEALLSEEDDPIDRRP) form a disordered region. Residues 1774-1783 (EALLSEEDDP) are compositionally biased toward acidic residues. Residue Ser1778 is modified to Phosphoserine. At Thr1802 the chain carries Phosphothreonine. Ser1804 bears the Phosphoserine mark. Thr1808 bears the Phosphothreonine mark. ANK repeat units follow at residues 1827-1871 (DGCT…SLQA), 1876-1905 (TGEMALHLAARYSRADAAKRLLDAGADANA), 1909-1939 (MGRCPLHAAVAADAQGVFQILIRNRVTDLDA), 1943-1972 (DGTTPLILAARLAVEGMVAELINCQADVNA), 1976-2005 (HGKSALHWAAAVNNVEATLLLLKNGANRDM), and 2009-2038 (KEETPLFLAAREGSYEAAKILLDHFANRDI). Phosphoserine occurs at positions 1842 and 1845. Ser2070, Ser2078, and Ser2081 each carry phosphoserine. Disordered regions lie at residues 2091-2168 (FLSL…TSSP) and 2380-2471 (VGKY…QVYA). At Thr2097 the chain carries Phosphothreonine. The segment covering 2098 to 2107 (PMGKKSRRPS) has biased composition (basic residues). 4 stretches are compositionally biased toward polar residues: residues 2108-2117 (AKSTMPTSLP), 2137-2150 (EKVQLSESSVTLSP), 2159-2168 (TYVSDTTSSP), and 2388-2406 (SQHSYASSNAAERTPSHSG). Residues 2417 to 2445 (PSPESPDQWSSSSPHSASDWSDVTTSPTP) are compositionally biased toward low complexity.

The protein belongs to the NOTCH family. In terms of assembly, heterodimer of a C-terminal fragment N(TM) and an N-terminal fragment N(EC) which are probably linked by disulfide bonds. Interacts with MAML1, MAML2 and MAML3 which act as transcriptional coactivators for NOTCH2. Interacts with RELA/p65. Interacts with HIF1AN. Interacts (via ANK repeats) with TCIM, the interaction inhibits the nuclear translocation of NOTCH2 N2ICD. Interacts with CUL1, RBX1, SKP1 and FBXW7 that are SCF(FBXW7) E3 ubiquitin-protein ligase complex components. Interacts with MINAR1; this interaction increases MINAR1 stability and function. Interacts with NOTCH2NL (NOTCH2NLA, NOTCH2NLB and/or NOTCH2NLC); leading to enhance Notch signaling pathway in a non-cell-autonomous manner. Interacts with MDK; this interaction mediates a nuclear accumulation of NOTCH2 and therefore activation of NOTCH2 signaling leading to interaction between HES1 and STAT3. Interacts with MINAR2. In terms of processing, synthesized in the endoplasmic reticulum as an inactive form which is proteolytically cleaved by a furin-like convertase in the trans-Golgi network before it reaches the plasma membrane to yield an active, ligand-accessible form. Cleavage results in a C-terminal fragment N(TM) and a N-terminal fragment N(EC). Following ligand binding, it is cleaved by TNF-alpha converting enzyme (TACE) to yield a membrane-associated intermediate fragment called notch extracellular truncation (NEXT). This fragment is then cleaved by presenilin dependent gamma-secretase to release a notch-derived peptide containing the intracellular domain (NICD) from the membrane. Hydroxylated by HIF1AN. Post-translationally, can be either O-glucosylated or O-xylosylated at Ser-613 by POGLUT1. In terms of processing, phosphorylated by GSK3. GSK3-mediated phosphorylation is necessary for NOTCH2 recognition by FBXW7, ubiquitination and degradation via the ubiquitin proteasome pathway. Expressed in the brain, heart, kidney, lung, skeletal muscle and liver. Ubiquitously expressed in the embryo.

It localises to the cell membrane. It is found in the nucleus. Its subcellular location is the cytoplasm. Functions as a receptor for membrane-bound ligands Jagged-1 (JAG1), Jagged-2 (JAG2) and Delta-1 (DLL1) to regulate cell-fate determination. Upon ligand activation through the released notch intracellular domain (NICD) it forms a transcriptional activator complex with RBPJ/RBPSUH and activates genes of the enhancer of split locus. Affects the implementation of differentiation, proliferation and apoptotic programs. Involved in bone remodeling and homeostasis. In collaboration with RELA/p65 enhances NFATc1 promoter activity and positively regulates RANKL-induced osteoclast differentiation. Positively regulates self-renewal of liver cancer cells. This Homo sapiens (Human) protein is Neurogenic locus notch homolog protein 2.